The following is a 393-amino-acid chain: uncharacterized protein (393 aa).

Helical transmembrane passes span 15 to 35 (IVAF…VTIF), 56 to 76 (WGWI…NVII), 86 to 106 (FYAS…FQIV), 131 to 151 (AVLI…LITW), 176 to 196 (LSLT…VIAF), 253 to 273 (LLAN…VFMI), 289 to 309 (LIDL…IPVA), and 349 to 369 (VYLP…QVIW).

It localises to the cell membrane. This is an uncharacterized protein from Mycoplasma genitalium (strain ATCC 33530 / DSM 19775 / NCTC 10195 / G37) (Mycoplasmoides genitalium).